The following is a 426-amino-acid chain: Histidine--tRNA ligase (426 aa).

It belongs to the class-II aminoacyl-tRNA synthetase family. In terms of assembly, homodimer.

The protein localises to the cytoplasm. It carries out the reaction tRNA(His) + L-histidine + ATP = L-histidyl-tRNA(His) + AMP + diphosphate + H(+). In Prochlorococcus marinus (strain MIT 9301), this protein is Histidine--tRNA ligase.